The sequence spans 350 residues: C-X-C chemokine receptor type 1 (350 aa).

Residues 1–39 (MSNITDPQMWDFDDLNFTGMPPADEDYSPCMLETETLNK) are Extracellular-facing. N-linked (GlcNAc...) asparagine glycosylation is found at asparagine 3 and asparagine 16. The chain crosses the membrane as a helical span at residues 40 to 66 (YVVIIAYALVFLLSLLGNSLVMLVILY). Topologically, residues 67–75 (SRVGRSVTD) are cytoplasmic. Residues 76–96 (VYLLNLALADLLFALTLPIWA) traverse the membrane as a helical segment. Residues 97–111 (ASKVNGWIFGTFLCK) lie on the Extracellular side of the membrane. Residues cysteine 110 and cysteine 187 are joined by a disulfide bond. The chain crosses the membrane as a helical span at residues 112–133 (VVSLLKEVNFYSGILLLACISV). Residues 134–154 (DRYLAIVHATRTLTQKRHLVK) are Cytoplasmic-facing. Residues 155–174 (FVCLGCWGLSMNLSLPFFLF) form a helical membrane-spanning segment. Residues 175 to 199 (RQAYHPNNSSPVCYEVLGNDTAKWR) lie on the Extracellular side of the membrane. A helical transmembrane segment spans residues 200-220 (MVLRILPHTFGFIVPLFVMLF). Residues 221 to 242 (CYGFTLRTLFKAHMGQKHRAMR) lie on the Cytoplasmic side of the membrane. A helical membrane pass occupies residues 243–264 (VIFAVVLIFLLCWLPYNLVLLA). Residues 265-285 (DTLMRTQVIQESCERRNNIGR) are Extracellular-facing. A helical membrane pass occupies residues 286–308 (ALDATEILGFLHSCLNPIIYAFI). At 309-350 (GQNFRHGFLKILAMHGLVSKEFLARHRVTSYTSSSVNVSSNL) the chain is on the cytoplasmic side.

This sequence belongs to the G-protein coupled receptor 1 family. Interacts with IL8. Interacts with GNAI2.

The protein resides in the cell membrane. Receptor to interleukin-8, which is a powerful neutrophils chemotactic factor. Binding of IL-8 to the receptor causes activation of neutrophils. This response is mediated via a G-protein that activates a phosphatidylinositol-calcium second messenger system. The polypeptide is C-X-C chemokine receptor type 1 (CXCR1) (Homo sapiens (Human)).